The following is a 38-amino-acid chain: Potassium channel toxin alpha-KTx 2.13 (38 aa).

Intrachain disulfides connect cysteine 7–cysteine 29, cysteine 13–cysteine 34, and cysteine 17–cysteine 36.

It belongs to the short scorpion toxin superfamily. Potassium channel inhibitor family. Alpha-KTx 02 subfamily. As to expression, expressed by the venom gland.

Its subcellular location is the secreted. Selective inhibitor of voltage-gated potassium channels, blocks the Kv1.2/KCNA2 (Kd=1.3 nM) and Kv1.3/KCNA3 (Kd=7.2 nM) channels. Association and dissociation rates of the toxin are slower for Kv1.2/KCNA2 than for Kv1.3/KCNA3. The protein is Potassium channel toxin alpha-KTx 2.13 of Centruroides suffusus (Durango bark scorpion).